Consider the following 185-residue polypeptide: MIEEVKKNCEEKMKKTVVALKEEFNMLRTGRASSALFDKIRVNCYGESTPLNQLANISIPEARLVVIQPWDKGLLVEIEKAVLQADLSVNPTNDGKVIRIAIPPLTEDRRKDLAKKAKTIAENSRVSVRNIRRDGIDEAKKLQKDGKISEDQLKTAEDAFQKSTDAYIAEINKVLEAKEKEIMEN.

This sequence belongs to the RRF family.

Its subcellular location is the cytoplasm. Its function is as follows. Responsible for the release of ribosomes from messenger RNA at the termination of protein biosynthesis. May increase the efficiency of translation by recycling ribosomes from one round of translation to another. The sequence is that of Ribosome-recycling factor from Treponema denticola (strain ATCC 35405 / DSM 14222 / CIP 103919 / JCM 8153 / KCTC 15104).